Here is a 1595-residue protein sequence, read N- to C-terminus: MHRGLNLLLILCALAPHVLGPASGLPTEGRAGLDIVHPVRVDAGGSFLSYELWPRVLRKRDVSAAQASSAFYQLQYQGRELLFNLTTNPYLLAPGFVSEIRRRSNLSNVHIQTSVPTCHLLGDVQDPELEGGFAAISACDGLRGVFQLSNEDYFIEPLDEVPAQPGHAQPHMVYKHKRSGQQDDSRTSGTCGVQGSPELKHQREHWEQRQQKRRQQRSISKEKWVETLVVADSKMVEYHGQPQVESYVLTIMNMVAGLYHDPSIGNPIHITVVRLIILEDEEKDLKITHHADDTLKNFCRWQKNVNMKGDDHPQHHDTAILLTRKDLCATMNHPCETLGLSHVAGLCHPQLSCSVSEDTGLPLAFTVAHELGHSFGIQHDGTGNDCESIGKRPFIMSPQLLYDRGIPLTWSRCSREYITRFLDRGWGLCLDDRPSKGVINFPSVLPGVLYDVNHQCRLQYGPSSAYCEDVDNVCYTLWCSVGTTCHSKMDAAVDGTSCGKNKWCLNGECVPEGFQPETVDGGWSGWSAWSVCSRSCGVGVRSSERQCTQPVPKNKGKYCVGERKRYRLCNLQACPPDRPSFRHTQCSQFDSMLYKGKLHKWVPVLNDENPCELHCRPFNYSNREKLRDAVMDGTPCYQGRISRDICIDGICKKVGCDFELDSGAEEDRCGVCRGDGSTCHTVSRTFKEAEGMGYVDVGLIPAGAREILIEEVAEAANFLALRSEDPDKYFLNGGWTIQWNGDYQVAGTTFTYTRKGNWETLTSPGPTTEPVWIQLLFQERNPGVHYKYTIQRASHSEAQPPEFSWHYGPWSKCPVTCGTGVQRQSLYCMEKQAGIVDEGHCDHLSRPRDRKRKCNEEPCPARWWVGDWQPCSRSCGPGGFFRRAVFCTRSVGLDEQRALEPSACGHLPRPLAEIPCYHYVACPSSWGVGNWSQCSVTCGAGIRQRSVLCINNTGVPCDGAERPITETFCFLQPCQYSTYIVDTGASGSGSSSPELFNEVDFDPHQPVPRPSPASSPKPVSISNAIDEEDPELDPPGPVFVDDFYYDYNFINFHEDLSYGSFEESHSDLVDIGGQTVPPHIRPTEPPSDSPVPTAGAPGAEEEGIQGSWSPSPLLSEASHSPPVLLENTPVNPLANFLTEEESPIGAPELGLPSVSWPPASVDGMVTSVAPGNPDELLVREDTQSQPSTPWSDRNKLSKDGNPLGPTSPALPKSPFPTQPSSPSNSTTQASLSPDAVEVSTGWNVALDPVLEADLKPVHAPTDPGLLDQIQTPHTEGTQSPGLLPRPAQETQTNSSKDPAVQPLQPSLVEDGAPTDLLPAKNASWQVGNWSQCSTTCGLGAIWRLVRCSSGNDEDCTLSSRPQPARHCHLRPCAAWRAGNWSKCSRNCGGGSATRDVQCVDTRDLRPLRPFHCQPGPTKPPTRQLCGTQPCLPWYTSSWRECSEACGGGEQQRLVTCPEPGLCEESLRPNNTRPCNTHPCTQWVVGPWGQCSAPCGGGVQRRLVKCVNTQTGLAEEDSDLCSHEAWPESSRPCATEDCELVEPSRCERDRLPFNFCETLRLLGRCQLPTIRAQCCRSCPPLSRGVPSRGHQRVARR.

A signal peptide spans 1 to 20 (MHRGLNLLLILCALAPHVLG). Positions 21–217 (PASGLPTEGR…QRQQKRRQQR (197 aa)) are excised as a propeptide. 2 N-linked (GlcNAc...) asparagine glycosylation sites follow: Asn-84 and Asn-105. Positions 165–218 (PGHAQPHMVYKHKRSGQQDDSRTSGTCGVQGSPELKHQREHWEQRQQKRRQQRS) are disordered. A Cysteine switch motif is present at residues 189–196 (GTCGVQGS). Residue Cys-191 coordinates Zn(2+). Basic and acidic residues predominate over residues 198-210 (ELKHQREHWEQRQ). One can recognise a Peptidase M12B domain in the interval 223 to 434 (KWVETLVVAD…GWGLCLDDRP (212 aa)). Cystine bridges form between Cys-299–Cys-353, Cys-328–Cys-335, Cys-347–Cys-429, Cys-386–Cys-413, Cys-456–Cys-479, Cys-467–Cys-485, Cys-474–Cys-504, Cys-498–Cys-509, Cys-532–Cys-569, Cys-536–Cys-574, and Cys-547–Cys-559. His-369 lines the Zn(2+) pocket. Glu-370 is a catalytic residue. Residues His-373 and His-379 each contribute to the Zn(2+) site. The 76-residue stretch at 444-519 (VLPGVLYDVN…VPEGFQPETV (76 aa)) folds into the Disintegrin domain. Residues 520 to 575 (DGGWSGWSAWSVCSRSCGVGVRSSERQCTQPVPKNKGKYCVGERKRYRLCNLQACP) enclose the TSP type-1 1 domain. N-linked (GlcNAc...) asparagine glycosylation is present at Asn-619. The tract at residues 680-791 (HTVSRTFKEA…PGVHYKYTIQ (112 aa)) is spacer. 3 TSP type-1 domains span residues 801 to 860 (PEFS…EPCP), 861 to 917 (ARWW…IPCY), and 922 to 975 (CPSS…QPCQ). Disordered regions lie at residues 989–1035 (GSSS…LDPP), 1077–1121 (PPHI…SHSP), 1179–1234 (REDT…LSPD), and 1255–1315 (KPVH…APTD). Composition is skewed to pro residues over residues 1005 to 1015 (QPVPRPSPASS) and 1079 to 1089 (HIRPTEPPSDS). Residues 1220 to 1232 (SSPSNSTTQASLS) show a composition bias toward low complexity. The span at 1268–1280 (QIQTPHTEGTQSP) shows a compositional bias: polar residues. 4 TSP type-1 domains span residues 1320-1368 (KNAS…RHCH), 1371-1431 (PCAA…QPCL), 1433-1476 (WYTS…PCNT), and 1478-1538 (PCTQ…EDCE). The PLAC domain maps to 1541 to 1581 (EPSRCERDRLPFNFCETLRLLGRCQLPTIRAQCCRSCPPLS).

As to quaternary structure, interacts with COMP. Zn(2+) is required as a cofactor. In terms of processing, glycosylated. Can be O-fucosylated by POFUT2 on a serine or a threonine residue found within the consensus sequence C1-X(2)-(S/T)-C2-G of the TSP type-1 repeat domains where C1 and C2 are the first and second cysteine residue of the repeat, respectively. Fucosylated repeats can then be further glycosylated by the addition of a beta-1,3-glucose residue by the glucosyltransferase, B3GALTL. Fucosylation mediates the efficient secretion of ADAMTS family members. Can also be C-glycosylated with one or two mannose molecules on tryptophan residues within the consensus sequence W-X-X-W of the TPRs. N- and C-glycosylations can also facilitate secretion. O-glycosylated proteoglycan; contains chondroitin sulfate. Post-translationally, may be cleaved by a furin endopeptidase. The precursor is sequentially processed. In terms of tissue distribution, detected in liver, ovary, kidney, testicle, lung and embryo.

The protein resides in the secreted. It is found in the extracellular space. It localises to the extracellular matrix. Metalloprotease. Was previously shown to degrade COMP. However, a later study found no activity against COMP. This is A disintegrin and metalloproteinase with thrombospondin motifs 7 (Adamts7) from Rattus norvegicus (Rat).